Here is a 228-residue protein sequence, read N- to C-terminus: Urease accessory protein UreF (228 aa).

Belongs to the UreF family. As to quaternary structure, ureD, UreF and UreG form a complex that acts as a GTP-hydrolysis-dependent molecular chaperone, activating the urease apoprotein by helping to assemble the nickel containing metallocenter of UreC. The UreE protein probably delivers the nickel.

The protein resides in the cytoplasm. Required for maturation of urease via the functional incorporation of the urease nickel metallocenter. The polypeptide is Urease accessory protein UreF (Yersinia pseudotuberculosis serotype IB (strain PB1/+)).